Here is a 1828-residue protein sequence, read N- to C-terminus: Proteasome activator complex subunit 4 (1828 aa).

6 HEAT repeats span residues Pro-462 to Cys-506, Asn-985 to Gly-1024, Tyr-1164 to Arg-1202, Asp-1339 to His-1377, Pro-1621 to Phe-1659, and Glu-1665 to Leu-1703. The interval Ala-1635–Lys-1723 is bromodomain-like (BRDL).

It belongs to the BLM10 family. As to quaternary structure, homodimer. Interacts with the 20S and 26S proteasomes.

It localises to the cytoplasm. The protein localises to the cytosol. The protein resides in the nucleus. It is found in the nucleus speckle. Associated component of the proteasome that specifically recognizes acetylated histones and promotes ATP- and ubiquitin-independent degradation of core histones during DNA damage response. Recognizes and binds acetylated histones via its bromodomain-like (BRDL) region and activates the proteasome by opening the gated channel for substrate entry. Binds to the core proteasome via its C-terminus, which occupies the same binding sites as the proteasomal ATPases, opening the closed structure of the proteasome via an active gating mechanism. involved in DNA damage response in somatic cells: binds to acetylated histones and promotes degradation of histones. The protein is Proteasome activator complex subunit 4 (psme4) of Xenopus laevis (African clawed frog).